A 604-amino-acid polypeptide reads, in one-letter code: Zinc finger protein chinmo (604 aa).

The region spanning 32-98 (ADVILSCDGV…MYKGEVHVSQ (67 aa)) is the BTB domain. 4 disordered regions span residues 122-155 (RLAAQQAQQHMGDLSPLDSPTGRRSVRNSLSGGS), 291-310 (CDSLMHPGGSSSSSGMGYTH), 330-437 (RSPY…DEST), and 450-470 (NLKYSPPPPPNSNTSSTTPNT). Positions 364-374 (PSSSASSTAPT) are enriched in low complexity. Residues 384 to 409 (ASPQSSRYENHSPSTTAGNGNATSSL) show a composition bias toward polar residues. Over residues 425–437 (ANDDDRELMDEST) the composition is skewed to acidic residues. Positions 461–470 (SNTSSTTPNT) are enriched in low complexity. C2H2-type zinc fingers lie at residues 517-540 (LKCLYCDRLYGYETNLRAHIRQRH) and 545-568 (VPCPFCERTFTRNNTVRRHIAREH).

Broadly expressed in the developing larval central nervous system (at protein level). Expressed in the larval lymph gland and circulating hemocytes (at protein level). Expressed in all cell types of the adult testis stem cell niche but not detected in somatic cells of the adult ovary (at protein level). In the testis, expressed at high levels in cyst stem cells and early cyst cells and, at lower levels, in germline stem cells (at protein level).

It localises to the nucleus. Required for morphological differentiation of postmitotic neurons during postembryonic brain development. Ensures production of appropriate neuron subtypes within a lineage by preventing precocious generation of late neuronal types of that lineage. Acts as a downstream mediator of the transcriptional activator Stat92e and is required for the development of the eye-antennal disk which gives rise to the adult eye, antenna and head capsule, for transcriptional repression of the Notch receptor ligand Ser and for the self-renewal of cyst stem cells in the testis. In the adult testis, maintains the male identify of adult somatic cyst stem cells. Represses expression and alternative splicing of transformer pre-mRNA, resulting in the production of the male-specific isoform of transcription factor dsx which ensures male-specific transcription of target genes. Plays a role in actin nuclear localization through its involvement in repressing the expression of the kinase Cdi. This maintains the cofilin/actin-depolymerizing factor homolog tsr in its unphosphorylated state which is required for actin nuclear import. The chain is Zinc finger protein chinmo from Drosophila melanogaster (Fruit fly).